The sequence spans 122 residues: MNKFIILALFAVAAASAMPNYPPPPPKPYHAPPPPPHHAHPPPPPPPPAHYGHHAHPAPAPVVHTYPVHAPHAKCGANLLVGCAPSVAHAPCVPLHGHGHGYPAPAPHYRAPESDSFDQFEE.

An N-terminal signal peptide occupies residues Met1–Ala17. Residues Tyr21 to Ala49 are compositionally biased toward pro residues. Disordered regions lie at residues Tyr21 to Val63 and Pro103 to Glu122. The 41-residue stretch at His69 to Tyr109 folds into the VM domain.

The protein belongs to the vitelline membrane protein family. Expressed in the middle and posterior regions of the follicle cells.

Its subcellular location is the secreted. The chain is Vitelline membrane protein 15a-3 from Aedes aegypti (Yellowfever mosquito).